Reading from the N-terminus, the 276-residue chain is Large ribosomal subunit protein uL2 (276 aa).

Disordered stretches follow at residues 29–55 and 219–276; these read PEKSLTTYKHSRQGRNNRGVITSRHRG and HVRG…RRTR. Positions 259–276 are enriched in basic residues; sequence TRNKKKQSSKLIVRRRTR.

Belongs to the universal ribosomal protein uL2 family. In terms of assembly, part of the 50S ribosomal subunit. Forms a bridge to the 30S subunit in the 70S ribosome.

One of the primary rRNA binding proteins. Required for association of the 30S and 50S subunits to form the 70S ribosome, for tRNA binding and peptide bond formation. It has been suggested to have peptidyltransferase activity; this is somewhat controversial. Makes several contacts with the 16S rRNA in the 70S ribosome. This chain is Large ribosomal subunit protein uL2, found in Rippkaea orientalis (strain PCC 8801 / RF-1) (Cyanothece sp. (strain PCC 8801)).